A 97-amino-acid chain; its full sequence is Aspartyl/glutamyl-tRNA(Asn/Gln) amidotransferase subunit C (97 aa).

This sequence belongs to the GatC family. Heterotrimer of A, B and C subunits.

It carries out the reaction L-glutamyl-tRNA(Gln) + L-glutamine + ATP + H2O = L-glutaminyl-tRNA(Gln) + L-glutamate + ADP + phosphate + H(+). It catalyses the reaction L-aspartyl-tRNA(Asn) + L-glutamine + ATP + H2O = L-asparaginyl-tRNA(Asn) + L-glutamate + ADP + phosphate + 2 H(+). In terms of biological role, allows the formation of correctly charged Asn-tRNA(Asn) or Gln-tRNA(Gln) through the transamidation of misacylated Asp-tRNA(Asn) or Glu-tRNA(Gln) in organisms which lack either or both of asparaginyl-tRNA or glutaminyl-tRNA synthetases. The reaction takes place in the presence of glutamine and ATP through an activated phospho-Asp-tRNA(Asn) or phospho-Glu-tRNA(Gln). The chain is Aspartyl/glutamyl-tRNA(Asn/Gln) amidotransferase subunit C from Prochlorococcus marinus (strain MIT 9301).